The primary structure comprises 170 residues: MQNRTGLILCALALLMGFLMVCLGAFFISWGSIFDCQGSLIAAYLLLPLGFVILLSGIFWSNYRQVTESKGVLRHMLRQHLAHGALPVATVDRPDFYPPAYEESLEVEKQSCPAEREASGIPPPLYTETGLEFQDGNDSHPEAPPSYRESIAGLVVTAISEDAQRRGQEC.

A run of 2 helical transmembrane segments spans residues I8–I28 and L40–W60. The tract at residues C112 to Y147 is disordered.

The protein resides in the membrane. The protein is Transmembrane protein 252 (TMEM252) of Homo sapiens (Human).